The sequence spans 379 residues: MLKRCGRRLLLALAGALLACLLVLTADPPPPPLPAERGRRALRSLAGPAGAAPAPGLGAAAAAPGALVRDVHSLSEYFSLLTRARRDAGPPPGAAPRPADGHPRPLAEPLAPRDVFIAVKTTKKFHRARLDLLLETWISRHKEMTFIFTDGEDEALARHTGNVVITNCSAAHSRQALSCKMAVEYDRFIESGRKWFCHVDDDNYVNLRALLRLLASYPHTRDVYVGKPSLDRPIQAMERVSENKVRPVHFWFATGGAGFCISRGLALKMSPWASGGHFMNTAERIRLPDDCTIGYIVEALLGVPLIRSGLFHSHLENLQQVPTSELHEQVTLSYGMFENKRNAVHVKGPFSVEADPSRFRSIHCHLYPDTPWCPRTAIF.

The Cytoplasmic segment spans residues Met1 to Arg8. Residues Leu9–Pro29 form a helical; Signal-anchor for type II membrane protein membrane-spanning segment. The Lumenal portion of the chain corresponds to Pro30–Phe379. A disordered region spans residues Arg86–Ala107. A substrate-binding site is contributed by Arg129. Asn167 carries N-linked (GlcNAc...) asparagine glycosylation. 2 disulfide bridges follow: Cys168–Cys179 and Cys197–Cys260. Asp201 provides a ligand contact to substrate. Residue Asp202 participates in Mn(2+) binding. Residue Asp290 is part of the active site. Mn(2+) is bound at residue His314. A disulfide bond links Cys364 and Cys373.

Belongs to the glycosyltransferase 31 family. Mn(2+) is required as a cofactor. It depends on Co(2+) as a cofactor. A soluble form may be derived from the membrane form by proteolytic processing.

It localises to the golgi apparatus. The protein localises to the golgi apparatus membrane. The enzyme catalyses 3-O-(alpha-L-fucosyl)-L-threonyl-[EGF-like domain protein] + UDP-N-acetyl-alpha-D-glucosamine = 3-O-(N-acetyl-beta-D-glucosaminyl-(1-&gt;3)-alpha-L-fucosyl)-L-threonyl-[EGF-like domain protein] + UDP + H(+). It carries out the reaction 3-O-(alpha-L-fucosyl)-L-seryl-[EGF-like domain protein] + UDP-N-acetyl-alpha-D-glucosamine = 3-O-(N-acetyl-beta-D-glucosaminyl-(1-&gt;3)-alpha-L-fucosyl)-L-seryl-[EGF-like domain protein] + UDP + H(+). Functionally, glycosyltransferase that initiates the elongation of O-linked fucose residues attached to EGF-like repeats in the extracellular domain of Notch molecules. Modulates NOTCH1 activity by modifying O-fucose residues at specific EGF-like domains resulting in inhibition of NOTCH1 activation by JAG1 and enhancement of NOTCH1 activation by DLL1 via an increase in its binding to DLL1. Decreases the binding of JAG1 to NOTCH2 but not that of DLL1. Essential mediator of somite segmentation and patterning. The sequence is that of Beta-1,3-N-acetylglucosaminyltransferase lunatic fringe from Homo sapiens (Human).